The sequence spans 322 residues: PIH1 domain-containing protein 2 (322 aa).

It belongs to the PIH1 family.

This chain is PIH1 domain-containing protein 2 (pih1d2), found in Danio rerio (Zebrafish).